A 328-amino-acid polypeptide reads, in one-letter code: Tetraacyldisaccharide 4'-kinase (328 aa).

Residue 55–62 (TAGGNGKT) coordinates ATP.

It belongs to the LpxK family.

It catalyses the reaction a lipid A disaccharide + ATP = a lipid IVA + ADP + H(+). Its pathway is glycolipid biosynthesis; lipid IV(A) biosynthesis; lipid IV(A) from (3R)-3-hydroxytetradecanoyl-[acyl-carrier-protein] and UDP-N-acetyl-alpha-D-glucosamine: step 6/6. Transfers the gamma-phosphate of ATP to the 4'-position of a tetraacyldisaccharide 1-phosphate intermediate (termed DS-1-P) to form tetraacyldisaccharide 1,4'-bis-phosphate (lipid IVA). The polypeptide is Tetraacyldisaccharide 4'-kinase (Escherichia coli O81 (strain ED1a)).